Consider the following 441-residue polypeptide: Serine hydroxymethyltransferase (441 aa).

(6S)-5,6,7,8-tetrahydrofolate contacts are provided by residues L119 and 123–125; that span reads GHL. K228 is modified (N6-(pyridoxal phosphate)lysine). A (6S)-5,6,7,8-tetrahydrofolate-binding site is contributed by 370 to 372; it reads SPF.

The protein belongs to the SHMT family. As to quaternary structure, homodimer. Requires pyridoxal 5'-phosphate as cofactor.

The protein resides in the cytoplasm. The enzyme catalyses (6R)-5,10-methylene-5,6,7,8-tetrahydrofolate + glycine + H2O = (6S)-5,6,7,8-tetrahydrofolate + L-serine. The protein operates within one-carbon metabolism; tetrahydrofolate interconversion. It participates in amino-acid biosynthesis; glycine biosynthesis; glycine from L-serine: step 1/1. Catalyzes the reversible interconversion of serine and glycine with tetrahydrofolate (THF) serving as the one-carbon carrier. This reaction serves as the major source of one-carbon groups required for the biosynthesis of purines, thymidylate, methionine, and other important biomolecules. Also exhibits THF-independent aldolase activity toward beta-hydroxyamino acids, producing glycine and aldehydes, via a retro-aldol mechanism. The protein is Serine hydroxymethyltransferase of Chlorobium phaeovibrioides (strain DSM 265 / 1930) (Prosthecochloris vibrioformis (strain DSM 265)).